Reading from the N-terminus, the 885-residue chain is MQERYQPNSVEAAAQQTWQARDAYLVHEHAKNPDGSEKPKFYACSMLPYPSGKLHMGHVRNYTINDMMARQLRMRGYNVLMPMGWDAFGMPAENAAIKSKVPPAKWTYDNIAYMKKQMKAMGLAIDWSREMCACDPKYYKWNQWLFLKMLEKGIAYRKTQVVNWDPVDQTVLANEQVIDGRGWRSGAPVEKREIPGYYLRITDYAEELLDQVSTNLPGWPERVRLMQENWIGKSEGLRFAFPHRIAGADGKLIQDGKLYVFTTRADTIMGVTFCAVAPEHPLATHAAQSNPALAAFVEQCKLGGTTEAEMATREKEGMPTGLTVTHPLTGAEIDVWVGNYVLMTYGDGAVMGVPAHDERDFAFARKYGLPIRQVVALEGKTYSTDAWQEWYGDKQAGRTVNSGKYDGLAYQAAVDTIAADLAAQGLGEKQTTWRLRDWGISRQRYWGTPIPIIHCADCGPVPVPEQDLPVVLPDDLIPDGSGNPLAKNEAFLSCSCPRCGKPARRETDTMDTFVDSSWYFMRYTSPDNDQAMVDARNDYWMPMDQYIGGIEHAVLHLLYARFWTKVMRDLGLLNFDEPFTKLLCQGMVLNHIYSRKTPQGGIEYFWPEEVDNVYDAKGAIVGAKLQRDGSEVNYGGVGTMSKSKNNGVDPQSLIDTLGADTARLFVMFASPPEQTLEWSDSGVEGANRFLRRLWALGYAQREAVGRGLATGADWAQAPAPVKELRREVYGLLKQADYDYQRIQYNTVVSACMKMLNAIDDAPLPEGPAADAARAETLGLLLRVLYPVVPHITWHLWQDLGYAEHLGDLLDAPWPHVDEAALVADEIELMLQVNGKLRGSIRVAAKAPKEDIERIAAAQEEVARFLEGRPPKRVIVVPGKLVNVVG.

The 'HIGH' region motif lies at 48–58 (PYPSGKLHMGH). Positions 639-643 (TMSKS) match the 'KMSKS' region motif. Position 642 (Lys-642) interacts with ATP.

Belongs to the class-I aminoacyl-tRNA synthetase family.

It is found in the cytoplasm. It carries out the reaction tRNA(Leu) + L-leucine + ATP = L-leucyl-tRNA(Leu) + AMP + diphosphate. This chain is Leucine--tRNA ligase, found in Bordetella bronchiseptica (strain ATCC BAA-588 / NCTC 13252 / RB50) (Alcaligenes bronchisepticus).